We begin with the raw amino-acid sequence, 468 residues long: 3-isopropylmalate dehydratase large subunit (468 aa).

[4Fe-4S] cluster is bound by residues Cys-347, Cys-407, and Cys-410.

Belongs to the aconitase/IPM isomerase family. LeuC type 1 subfamily. As to quaternary structure, heterodimer of LeuC and LeuD. [4Fe-4S] cluster is required as a cofactor.

The enzyme catalyses (2R,3S)-3-isopropylmalate = (2S)-2-isopropylmalate. Its pathway is amino-acid biosynthesis; L-leucine biosynthesis; L-leucine from 3-methyl-2-oxobutanoate: step 2/4. Functionally, catalyzes the isomerization between 2-isopropylmalate and 3-isopropylmalate, via the formation of 2-isopropylmaleate. The polypeptide is 3-isopropylmalate dehydratase large subunit (Campylobacter jejuni subsp. jejuni serotype O:6 (strain 81116 / NCTC 11828)).